The sequence spans 185 residues: MLNQIKQDAQDRMTKSIDALRNSLASVRTGRASPSLLDGIKIKAYGTDTPLNQVASISVSEGRSLVITVFDKNMSKDVEKAIYASDLGLTPTVVGTLIRLNLPPLTEERRKELTKVVHSEGEDTKVAIRNIRRDANQQIKDMLKSKEITEDEVRHGEEDIQKLTDKAIKSVDEVVKSKEQELMTV.

Belongs to the RRF family.

It is found in the cytoplasm. Responsible for the release of ribosomes from messenger RNA at the termination of protein biosynthesis. May increase the efficiency of translation by recycling ribosomes from one round of translation to another. The chain is Ribosome-recycling factor from Xylella fastidiosa (strain Temecula1 / ATCC 700964).